The following is a 688-amino-acid chain: Elongation factor G (688 aa).

The tr-type G domain maps to E8–M282. GTP is bound by residues A17–T24, D81–H85, and N135–D138.

The protein belongs to the TRAFAC class translation factor GTPase superfamily. Classic translation factor GTPase family. EF-G/EF-2 subfamily.

It is found in the cytoplasm. Its function is as follows. Catalyzes the GTP-dependent ribosomal translocation step during translation elongation. During this step, the ribosome changes from the pre-translocational (PRE) to the post-translocational (POST) state as the newly formed A-site-bound peptidyl-tRNA and P-site-bound deacylated tRNA move to the P and E sites, respectively. Catalyzes the coordinated movement of the two tRNA molecules, the mRNA and conformational changes in the ribosome. In Phytoplasma mali (strain AT), this protein is Elongation factor G.